Consider the following 549-residue polypeptide: RNA-induced transcriptional silencing complex protein tas3 (549 aa).

Disordered stretches follow at residues 89–111, 126–184, 202–225, 298–361, and 381–430; these read KNSP…VRAS, DGKE…SDSI, IRSS…SSKS, LDNF…HLEK, and AHFH…PLAS. A compositionally biased stretch (polar residues) spans 298-307; sequence LDNFNRPSQQ. 2 stretches are compositionally biased toward basic and acidic residues: residues 328–361 and 403–416; these read YDSY…HLEK and SDRQ…ELPT. Residues 419–430 show a composition bias toward polar residues; the sequence is LNASDSHNPLAS.

As to quaternary structure, ago1, chp1 and tas3 interact to form the core of the RNA-induced transcriptional silencing (RITS) complex. The RITS complex interacts with the RDRC complex via interaction between ago1 and hrr1. Clr4 has a role in mediating this interaction.

It localises to the nucleus. It is found in the cytoplasm. The protein resides in the cytoskeleton. The protein localises to the microtubule organizing center. Its subcellular location is the spindle pole body. Its function is as follows. Has a role in the RNA interference (RNAi) pathway which is important for heterochromatin formation and accurate chromosome segregation. A member of the RNA-induced transcriptional silencing (RITS) complex which is involved in the biosynthesis of dsRNA from primer siRNAs provided by the RNA-directed RNA polymerase (RDRC) complex. This is RNA-induced transcriptional silencing complex protein tas3 (tas3) from Schizosaccharomyces pombe (strain 972 / ATCC 24843) (Fission yeast).